The sequence spans 510 residues: NAD(P)H-quinone oxidoreductase subunit 2 B, chloroplastic (510 aa).

The next 13 helical transmembrane spans lie at 24–44 (LLLFHGSFIFPECILIFGLIL), 57–77 (IPWLYFISSTSLVISITALLF), 99–119 (IFQFLILLCSTLCIPLSVEYI), 124–144 (MAITEFLLFVLTATLGGMFLC), 149–169 (LITIFVAPECFSLCSYLLSGY), 183–203 (YLLMGGASSSILVHGFSWLYG), 227–247 (PGISIALIFITVGIGFKLSPA), 295–315 (WHLHLEILAILSMILGNLIAI), 323–343 (MLAYSSIGQIGYVIIGIIVGD), 347–367 (GYASMITYMLFYISMNLGTFA), 395–415 (ALSLALCLLSLGGLPPLAGFF), 418–438 (LHLFWCGWQAGLYFLVSIGLL), and 484–504 (MIVCVIASTIPGISMNPIIAI).

The protein belongs to the complex I subunit 2 family. NDH is composed of at least 16 different subunits, 5 of which are encoded in the nucleus.

Its subcellular location is the plastid. It is found in the chloroplast thylakoid membrane. It carries out the reaction a plastoquinone + NADH + (n+1) H(+)(in) = a plastoquinol + NAD(+) + n H(+)(out). It catalyses the reaction a plastoquinone + NADPH + (n+1) H(+)(in) = a plastoquinol + NADP(+) + n H(+)(out). In terms of biological role, NDH shuttles electrons from NAD(P)H:plastoquinone, via FMN and iron-sulfur (Fe-S) centers, to quinones in the photosynthetic chain and possibly in a chloroplast respiratory chain. The immediate electron acceptor for the enzyme in this species is believed to be plastoquinone. Couples the redox reaction to proton translocation, and thus conserves the redox energy in a proton gradient. This Buxus microphylla (Littleleaf boxwood) protein is NAD(P)H-quinone oxidoreductase subunit 2 B, chloroplastic.